The chain runs to 378 residues: MGIHGLAKLIADVAPSAIRENDIKSYFGRKVAIDASMSIYQFLIAVRQGGDVLQNEEGETTSLMGMFYRTIRMENGIKPVYVFDGKPPQLKSGELAKRSERRAEAEKQLQQAQEAGMEEEVEKFTKRLVKVTKQHNDECKHLLSLMGIPYLDAPSEAEASCAALAKAGKVYAAATEDMDCLTFGSPVLMRHLTASEAKKLPIQEFHLSRVLQELGLNQEQFVDLCILLGSDYCESIRGIGAKRAVDLIQKHKSIEEIVRRLDPSKYPVPENWLHKEAQQLFLEPEVVDPESVELKWSEPNEEELVKFMCGEKQFSEERIRSGVKRLSKSRQGSTQGRLDDFFKVTGSLSSAKRKEPEPKGPAKKKAKTGGAGKFRRGK.

The segment at 1–102 is N-domain; sequence MGIHGLAKLI…GELAKRSERR (102 aa). Arginine 19 is subject to Symmetric dimethylarginine; by PRMT5. Aspartate 34 provides a ligand contact to Mg(2+). DNA is bound by residues arginine 47 and arginine 69. Lysine 78 is modified (N6-acetyllysine). A Mg(2+)-binding site is contributed by aspartate 84. Symmetric dimethylarginine; by PRMT5 occurs at positions 98 and 102. The tract at residues 120–251 is I-domain; the sequence is EVEKFTKRLV…KRAVDLIQKH (132 aa). Residues glutamate 156, glutamate 158, aspartate 177, and aspartate 179 each contribute to the Mg(2+) site. Glutamate 156 provides a ligand contact to DNA. A Phosphoserine; by CDK2 modification is found at serine 185. The residue at position 190 (arginine 190) is a Symmetric dimethylarginine; by PRMT5. Position 195 is a phosphoserine (serine 195). DNA-binding residues include glycine 229 and aspartate 231. Aspartate 231 contributes to the Mg(2+) binding site. Phosphoserine is present on residues serine 253, serine 291, and serine 333. A disordered region spans residues 325–378; the sequence is RLSKSRQGSTQGRLDDFFKVTGSLSSAKRKEPEPKGPAKKKAKTGGAGKFRRGK. Phosphothreonine is present on threonine 334. Positions 334-342 are interaction with PCNA; that stretch reads TQGRLDDFF. Residues lysine 352, lysine 373, and lysine 378 each carry the N6-acetyllysine modification. Basic residues predominate over residues 361 to 378; that stretch reads PAKKKAKTGGAGKFRRGK.

The protein belongs to the XPG/RAD2 endonuclease family. FEN1 subfamily. As to quaternary structure, interacts with PCNA. Three molecules of FEN1 bind to one PCNA trimer with each molecule binding to one PCNA monomer. PCNA stimulates the nuclease activity without altering cleavage specificity. The C-terminal domain binds EP300; can bind simultaneously to both PCNA and EP300. Interacts with DDX11; this interaction is direct and increases flap endonuclease activity of FEN1. Interacts with WDR4; regulating its endonuclease activity. Interacts with POLB. The cofactor is Mg(2+). In terms of processing, acetylated by EP300. Acetylation inhibits both endonuclease and exonuclease activity. Acetylation also reduces DNA-binding activity but does not affect interaction with PCNA or EP300. Phosphorylation upon DNA damage induces relocalization to the nuclear plasma. Phosphorylation at Ser-185 by CDK2 occurs during late S-phase and results in dissociation from PCNA. Post-translationally, methylation at Arg-190 by PRMT5 impedes Ser-185 phosphorylation and increases interaction with PCNA.

Its subcellular location is the nucleus. The protein resides in the nucleolus. The protein localises to the nucleoplasm. It localises to the mitochondrion. Functionally, structure-specific nuclease with 5'-flap endonuclease and 5'-3' exonuclease activities involved in DNA replication and repair. During DNA replication, cleaves the 5'-overhanging flap structure that is generated by displacement synthesis when DNA polymerase encounters the 5'-end of a downstream Okazaki fragment. It enters the flap from the 5'-end and then tracks to cleave the flap base, leaving a nick for ligation. Also involved in the long patch base excision repair (LP-BER) pathway, by cleaving within the apurinic/apyrimidinic (AP) site-terminated flap. Acts as a genome stabilization factor that prevents flaps from equilibrating into structures that lead to duplications and deletions. Also possesses 5'-3' exonuclease activity on nicked or gapped double-stranded DNA, and exhibits RNase H activity. Also involved in replication and repair of rDNA and in repairing mitochondrial DNA. In Mus musculus (Mouse), this protein is Flap endonuclease 1.